Here is an 875-residue protein sequence, read N- to C-terminus: Phosphoenolpyruvate carboxylase (875 aa).

Catalysis depends on residues H137 and K542.

Belongs to the PEPCase type 1 family. Mg(2+) serves as cofactor.

It catalyses the reaction oxaloacetate + phosphate = phosphoenolpyruvate + hydrogencarbonate. Functionally, forms oxaloacetate, a four-carbon dicarboxylic acid source for the tricarboxylic acid cycle. The polypeptide is Phosphoenolpyruvate carboxylase (Pseudomonas putida (strain ATCC 47054 / DSM 6125 / CFBP 8728 / NCIMB 11950 / KT2440)).